A 662-amino-acid polypeptide reads, in one-letter code: Eukaryotic peptide chain release factor GTP-binding subunit (662 aa).

Residues 1–220 (MASNQPNNGE…PATVTEDATD (220 aa)) are disordered. The segment covering 26-40 (AKAPTFTPKAAPFIP) has biased composition (low complexity). Over residues 62-89 (YTGQGQNSNSPHPTKSYQQYYQKPTGNT) the composition is skewed to polar residues. Residues 91-102 (DEDKSRVPDFSK) show a composition bias toward basic and acidic residues. Residues 122-134 (GGNTSAPKSTKPI) show a composition bias toward polar residues. A compositionally biased stretch (low complexity) spans 141-158 (TKAPTTTKPAAPAAQSKT). Residue Thr-182 is modified to Phosphothreonine. Over residues 192 to 213 (AKTPSAPAAALKKAAEAAEPAT) the composition is skewed to low complexity. The tr-type G domain maps to 236-464 (KEHVNIVFIG…LDSMTHLERK (229 aa)). The interval 245-252 (GHVDAGKS) is G1. 245–252 (GHVDAGKS) contacts GTP. The interval 301–305 (GKTVE) is G2. Residues 322 to 325 (DAPG) form a G3 region. GTP-binding positions include 384 to 387 (NKMD) and 428 to 429 (AY). Residues 384-387 (NKMD) are G4. Residues 427-429 (SAY) form a G5 region. At Ser-539 the chain carries Phosphoserine.

This sequence belongs to the TRAFAC class translation factor GTPase superfamily. Classic translation factor GTPase family. ERF3 subfamily. As to quaternary structure, component of the eRF1-eRF3-GTP ternary complex, composed of sup45/eRF1, sup35/eRF3 and GTP.

Its subcellular location is the cytoplasm. The enzyme catalyses GTP + H2O = GDP + phosphate + H(+). GTPase component of the eRF1-eRF3-GTP ternary complex, a ternary complex that mediates translation termination in response to the termination codons. Sup35/eRF3 mediates sup45/ERF1 delivery to stop codons: The eRF1-eRF3-GTP complex binds to a stop codon in the ribosomal A-site. GTP hydrolysis by sup35/eRF3 induces a conformational change that leads to its dissociation, permitting sup45/eRF1 to accommodate fully in the A-site. The protein is Eukaryotic peptide chain release factor GTP-binding subunit (sup35) of Schizosaccharomyces pombe (strain 972 / ATCC 24843) (Fission yeast).